The primary structure comprises 64 residues: Large ribosomal subunit protein bL35 (64 aa).

This sequence belongs to the bacterial ribosomal protein bL35 family.

This Shewanella oneidensis (strain ATCC 700550 / JCM 31522 / CIP 106686 / LMG 19005 / NCIMB 14063 / MR-1) protein is Large ribosomal subunit protein bL35.